Here is a 186-residue protein sequence, read N- to C-terminus: MSEHNPYGTMHGTTIITVRKGGMVVMAGDGQVSLGQTVMKGNARKVRRIGKGEVIAGFAGATADAFTLLERLEKKLEQYPGQLMRAAVELAKDWRTDKYLRNLEAMMLVADKTVTLAITGNGDVLEPEHGTIAIGSGGNYALAAALALMDTEKSAEEVARKAMKIAADICVYTNENVLVETLESAN.

T13 is a catalytic residue. Na(+) is bound by residues A167, C170, and T173.

It belongs to the peptidase T1B family. HslV subfamily. As to quaternary structure, a double ring-shaped homohexamer of HslV is capped on each side by a ring-shaped HslU homohexamer. The assembly of the HslU/HslV complex is dependent on binding of ATP.

The protein localises to the cytoplasm. The enzyme catalyses ATP-dependent cleavage of peptide bonds with broad specificity.. With respect to regulation, allosterically activated by HslU binding. In terms of biological role, protease subunit of a proteasome-like degradation complex believed to be a general protein degrading machinery. The chain is ATP-dependent protease subunit HslV from Allorhizobium ampelinum (strain ATCC BAA-846 / DSM 112012 / S4) (Agrobacterium vitis (strain S4)).